Here is a 202-residue protein sequence, read N- to C-terminus: Orotate phosphoribosyltransferase (202 aa).

Residues Lys93 and Glu113–Ser121 contribute to the 5-phospho-alpha-D-ribose 1-diphosphate site. Residues Thr117 and Arg145 each coordinate orotate.

Belongs to the purine/pyrimidine phosphoribosyltransferase family. PyrE subfamily. In terms of assembly, homodimer. Mg(2+) serves as cofactor.

It carries out the reaction orotidine 5'-phosphate + diphosphate = orotate + 5-phospho-alpha-D-ribose 1-diphosphate. It participates in pyrimidine metabolism; UMP biosynthesis via de novo pathway; UMP from orotate: step 1/2. In terms of biological role, catalyzes the transfer of a ribosyl phosphate group from 5-phosphoribose 1-diphosphate to orotate, leading to the formation of orotidine monophosphate (OMP). The protein is Orotate phosphoribosyltransferase of Campylobacter jejuni subsp. jejuni serotype O:2 (strain ATCC 700819 / NCTC 11168).